A 121-amino-acid chain; its full sequence is Anther-specific protein SF2 (121 aa).

The first 21 residues, 1-21 (MANNSVSYLVLLLLVFVLAIS), serve as a signal peptide directing secretion. N-linked (GlcNAc...) asparagine glycosylation occurs at asparagine 115.

In terms of tissue distribution, epidermal anther cells.

It localises to the secreted. It is found in the cell wall. In terms of biological role, anther-specific cell wall protein which could contribute to the cell wall architecture of epidermal anther cells via intermolecular disulfide bridges. The sequence is that of Anther-specific protein SF2 from Helianthus annuus (Common sunflower).